Here is a 508-residue protein sequence, read N- to C-terminus: Strychnine-11-hydroxylase (508 aa).

A helical membrane pass occupies residues Met5 to Ile25. Cys445 contributes to the heme binding site.

The protein belongs to the cytochrome P450 family. Heme serves as cofactor.

Its subcellular location is the membrane. It carries out the reaction beta-colubrine + reduced [NADPH--hemoprotein reductase] + O2 = 11-demethylbrucine + oxidized [NADPH--hemoprotein reductase] + H2O + H(+). Its pathway is alkaloid biosynthesis. Monooxygenase involved in the biosynthesis of curare monoterpene indole alkaloids (MIAs), natural products such as strychnine, a neurotoxic compound used as a pesticide to control rodents, and its pharmacologically active derivatives, including brucine, used to regulate blood pressure. Curare alkaloids act as animal glycine receptor antagonists. Catalyzes the conversion of beta-colubrine to 11-deMe brucine. This Strychnos nux-vomica (Poison nut) protein is Strychnine-11-hydroxylase.